Reading from the N-terminus, the 445-residue chain is Homogentisate 1,2-dioxygenase (445 aa).

Lys98 bears the N6-acetyllysine mark. Residues His335, Glu341, and His371 each coordinate Fe cation. The residue at position 414 (Lys414) is an N6-succinyllysine.

The protein belongs to the homogentisate dioxygenase family. As to quaternary structure, homohexamer arranged as a dimer of trimers. Fe cation serves as cofactor.

The catalysed reaction is homogentisate + O2 = 4-maleylacetoacetate + H(+). It functions in the pathway amino-acid degradation; L-phenylalanine degradation; acetoacetate and fumarate from L-phenylalanine: step 4/6. Functionally, catalyzes the conversion of homogentisate to maleylacetoacetate. This is Homogentisate 1,2-dioxygenase (Hgd) from Mus musculus (Mouse).